The following is a 118-amino-acid chain: Large ribosomal subunit protein uL18 (118 aa).

It belongs to the universal ribosomal protein uL18 family. In terms of assembly, part of the 50S ribosomal subunit; part of the 5S rRNA/L5/L18/L25 subcomplex. Contacts the 5S and 23S rRNAs.

In terms of biological role, this is one of the proteins that bind and probably mediate the attachment of the 5S RNA into the large ribosomal subunit, where it forms part of the central protuberance. The polypeptide is Large ribosomal subunit protein uL18 (Rickettsia conorii (strain ATCC VR-613 / Malish 7)).